A 172-amino-acid polypeptide reads, in one-letter code: Centrin-2 (172 aa).

The disordered stretch occupies residues 1 to 31; sequence MASNFKKANMASTTQRKRMSPKPELTEEQKQ. An N-acetylalanine modification is found at alanine 2. The required for self-assembly stretch occupies residues 2-25; the sequence is ASNFKKANMASTTQRKRMSPKPEL. Serine 20 is modified (phosphoserine). Residue lysine 22 forms a Glycyl lysine isopeptide (Lys-Gly) (interchain with G-Cter in SUMO2) linkage. The residue at position 26 (threonine 26) is a Phosphothreonine. EF-hand domains lie at 28 to 63, 64 to 99, 101 to 136, and 137 to 172; these read EQKQEIREAFDLFDADGTGTIDVKELKVAMRALGFE, PKKEEIKKMISEIDKEGTGKMNFSDFLTVMTQKMSE, DTKEEILKAFKLFDDDETGKISFKNLKRVAKELGEN, and LSDEELQEMIDEADRDGDGEVNEQEFLRIMKKTSLY. The Ca(2+) site is built by aspartate 41, aspartate 43, threonine 45, threonine 47, and glutamate 52. Aspartate 150, aspartate 152, aspartate 154, glutamate 156, and glutamate 161 together coordinate Ca(2+).

It belongs to the centrin family. In terms of assembly, monomer. Homooligomer. Interacts with CCP110, SFI1. Component of the XPC complex composed of XPC, RAD23B and CETN2. Component of the nuclear pore complex (NPC)-associated TREX-2 complex (transcription and export complex 2), composed of at least GANP, 2 copies of ENY2, PCID2, SEM1/DSS1, and either centrin CETN2 or centrin CETN3. The TREX-2 complex also associates with ALYREF/ALY and with the nucleoporin NUP153. Interacts with USP49. Forms a microtubule-associated complex with POC5, POC1B and FAM161A. Interacts with CCDC15.

It localises to the cytoplasm. The protein resides in the cytoskeleton. The protein localises to the microtubule organizing center. Its subcellular location is the centrosome. It is found in the centriole. It localises to the nucleus. The protein resides in the nucleus envelope. The protein localises to the nuclear pore complex. Functionally, plays a fundamental role in microtubule organizing center structure and function. Required for centriole duplication and correct spindle formation. Has a role in regulating cytokinesis and genome stability via cooperation with CALM1 and CCP110. Its function is as follows. Involved in global genome nucleotide excision repair (GG-NER) by acting as component of the XPC complex. Cooperatively with RAD23B appears to stabilize XPC. In vitro, stimulates DNA binding of the XPC:RAD23B dimer. The XPC complex is proposed to represent the first factor bound at the sites of DNA damage and together with other core recognition factors, XPA, RPA and the TFIIH complex, is part of the pre-incision (or initial recognition) complex. The XPC complex recognizes a wide spectrum of damaged DNA characterized by distortions of the DNA helix such as single-stranded loops, mismatched bubbles or single-stranded overhangs. The orientation of XPC complex binding appears to be crucial for inducing a productive NER. XPC complex is proposed to recognize and to interact with unpaired bases on the undamaged DNA strand which is followed by recruitment of the TFIIH complex and subsequent scanning for lesions in the opposite strand in a 5'-to-3' direction by the NER machinery. Cyclobutane pyrimidine dimers (CPDs) which are formed upon UV-induced DNA damage esacpe detection by the XPC complex due to a low degree of structural perurbation. Instead they are detected by the UV-DDB complex which in turn recruits and cooperates with the XPC complex in the respective DNA repair. In terms of biological role, as a component of the TREX-2 complex, involved in the export of mRNAs to the cytoplasm through the nuclear pores. This chain is Centrin-2 (CETN2), found in Bos taurus (Bovine).